Reading from the N-terminus, the 864-residue chain is Structure-specific endonuclease subunit SLX4 (864 aa).

8 disordered regions span residues 1–21, 49–69, 91–113, 161–190, 289–318, 346–385, 413–433, and 625–767; these read MTTQSSSDGRMFTSSIIPVIP, LSTSTSRGPTRSDTVGDKTQG, TGTGGKAATGKRLKRRTESPGNA, ANQTVSRQPETKISAPKECNDTTQPAGNDH, LSDDRQSSITEDSESATSKPRRVKAKNRPK, TLLSDEPGKEKSAAKRTSGARCAKPGRKKSTTTEKKNEPP, ANGHSEDQHEQNEGTSHISNS, and KAPN…VTSS. Residues 295–306 are compositionally biased toward polar residues; it reads SSITEDSESATS. Basic residues predominate over residues 307–318; the sequence is KPRRVKAKNRPK. Residues 656–668 are compositionally biased toward polar residues; the sequence is QPNSISQKATTQV. A compositionally biased stretch (low complexity) spans 685–695; it reads VSSRRSTSTSK. Residues 743–767 show a composition bias toward polar residues; it reads PESFNLPTTPLTIRSGKVPSTVTSS.

It belongs to the SLX4 family. In terms of assembly, forms a heterodimer with SLX1. In terms of processing, phosphorylated in response to DNA damage.

It is found in the nucleus. Its function is as follows. Regulatory subunit of the SLX1-SLX4 structure-specific endonuclease that resolves DNA secondary structures generated during DNA repair and recombination. Has endonuclease activity towards branched DNA substrates, introducing single-strand cuts in duplex DNA close to junctions with ss-DNA. The chain is Structure-specific endonuclease subunit SLX4 from Paracoccidioides lutzii (strain ATCC MYA-826 / Pb01) (Paracoccidioides brasiliensis).